The following is a 236-amino-acid chain: ATP synthase subunit a (236 aa).

5 helical membrane-spanning segments follow: residues 17 to 37, 75 to 95, 112 to 132, 174 to 194, and 208 to 228; these read LSDM…AVAA, FLTL…LGLP, DATV…YYGV, IYAG…YGVL, and FSIF…MVYM.

It belongs to the ATPase A chain family. In terms of assembly, F-type ATPases have 2 components, CF(1) - the catalytic core - and CF(0) - the membrane proton channel. CF(1) has five subunits: alpha(3), beta(3), gamma(1), delta(1), epsilon(1). CF(0) has three main subunits: a(1), b(2) and c(9-12). The alpha and beta chains form an alternating ring which encloses part of the gamma chain. CF(1) is attached to CF(0) by a central stalk formed by the gamma and epsilon chains, while a peripheral stalk is formed by the delta and b chains.

It localises to the cell membrane. In terms of biological role, key component of the proton channel; it plays a direct role in the translocation of protons across the membrane. This is ATP synthase subunit a from Geobacillus stearothermophilus (Bacillus stearothermophilus).